Consider the following 98-residue polypeptide: Small ribosomal subunit protein bS6c (98 aa).

The protein belongs to the bacterial ribosomal protein bS6 family.

It localises to the plastid. Its subcellular location is the chloroplast. Binds together with bS18 to 16S ribosomal RNA. The protein is Small ribosomal subunit protein bS6c of Phaeodactylum tricornutum (strain CCAP 1055/1).